The chain runs to 256 residues: Small ribosomal subunit protein uS2 (256 aa).

The protein belongs to the universal ribosomal protein uS2 family.

The protein is Small ribosomal subunit protein uS2 of Ruegeria sp. (strain TM1040) (Silicibacter sp.).